A 149-amino-acid polypeptide reads, in one-letter code: Large ribosomal subunit protein bL9 (149 aa).

Belongs to the bacterial ribosomal protein bL9 family.

In terms of biological role, binds to the 23S rRNA. The polypeptide is Large ribosomal subunit protein bL9 (Leptospira interrogans serogroup Icterohaemorrhagiae serovar copenhageni (strain Fiocruz L1-130)).